A 239-amino-acid polypeptide reads, in one-letter code: Cysteine-rich venom protein (239 aa).

A signal peptide spans Met1–Gly19. The 128-residue stretch at Asp39 to Tyr166 folds into the SCP domain. Cystine bridges form between Cys75–Cys153, Cys92–Cys167, Cys148–Cys164, Cys186–Cys193, Cys189–Cys198, Cys202–Cys234, Cys211–Cys228, and Cys219–Cys232. One can recognise a ShKT domain in the interval Cys202 to Cys234.

This sequence belongs to the CRISP family. In terms of tissue distribution, expressed by the venom gland.

Its subcellular location is the secreted. Its function is as follows. Blocks contraction of smooth muscle elicited by high potassium-induced depolarization, but does not block caffeine-stimulated contraction. May target voltage-gated calcium channels in smooth muscle. The chain is Cysteine-rich venom protein from Vipera berus (Common European adder).